A 508-amino-acid polypeptide reads, in one-letter code: Glycerol kinase (508 aa).

Thr14 provides a ligand contact to ADP. Thr14, Thr15, and Ser16 together coordinate ATP. Thr14 is a sn-glycerol 3-phosphate binding site. Arg18 contacts ADP. Residues Arg84, Glu85, Tyr136, and Asp245 each coordinate sn-glycerol 3-phosphate. Arg84, Glu85, Tyr136, Asp245, and Gln246 together coordinate glycerol. Thr267 and Gly314 together coordinate ADP. ATP contacts are provided by Thr267, Gly314, and Gln318. An ADP-binding site is contributed by Asn419.

It belongs to the FGGY kinase family.

It carries out the reaction glycerol + ATP = sn-glycerol 3-phosphate + ADP + H(+). It functions in the pathway polyol metabolism; glycerol degradation via glycerol kinase pathway; sn-glycerol 3-phosphate from glycerol: step 1/1. Its activity is regulated as follows. Inhibited by fructose 1,6-bisphosphate (FBP). In terms of biological role, key enzyme in the regulation of glycerol uptake and metabolism. Catalyzes the phosphorylation of glycerol to yield sn-glycerol 3-phosphate. The polypeptide is Glycerol kinase (Bordetella pertussis (strain Tohama I / ATCC BAA-589 / NCTC 13251)).